The primary structure comprises 156 residues: Endoribonuclease YbeY (156 aa).

His117, His121, and His127 together coordinate Zn(2+).

Belongs to the endoribonuclease YbeY family. Zn(2+) is required as a cofactor.

The protein resides in the cytoplasm. Functionally, single strand-specific metallo-endoribonuclease involved in late-stage 70S ribosome quality control and in maturation of the 3' terminus of the 16S rRNA. The sequence is that of Endoribonuclease YbeY from Herminiimonas arsenicoxydans.